Reading from the N-terminus, the 399-residue chain is 1-deoxy-D-xylulose 5-phosphate reductoisomerase (399 aa).

Positions 13, 14, 15, 16, and 127 each coordinate NADPH. Lysine 128 contributes to the 1-deoxy-D-xylulose 5-phosphate binding site. NADPH is bound at residue glutamate 129. Aspartate 153 serves as a coordination point for Mn(2+). Positions 154, 155, 187, and 210 each coordinate 1-deoxy-D-xylulose 5-phosphate. Glutamate 155 lines the Mn(2+) pocket. Glycine 216 is an NADPH binding site. 4 residues coordinate 1-deoxy-D-xylulose 5-phosphate: serine 223, asparagine 228, lysine 229, and glutamate 232. Glutamate 232 is a Mn(2+) binding site.

The protein belongs to the DXR family. Requires Mg(2+) as cofactor. It depends on Mn(2+) as a cofactor.

It carries out the reaction 2-C-methyl-D-erythritol 4-phosphate + NADP(+) = 1-deoxy-D-xylulose 5-phosphate + NADPH + H(+). It participates in isoprenoid biosynthesis; isopentenyl diphosphate biosynthesis via DXP pathway; isopentenyl diphosphate from 1-deoxy-D-xylulose 5-phosphate: step 1/6. In terms of biological role, catalyzes the NADPH-dependent rearrangement and reduction of 1-deoxy-D-xylulose-5-phosphate (DXP) to 2-C-methyl-D-erythritol 4-phosphate (MEP). The chain is 1-deoxy-D-xylulose 5-phosphate reductoisomerase from Bordetella petrii (strain ATCC BAA-461 / DSM 12804 / CCUG 43448).